Here is a 130-residue protein sequence, read N- to C-terminus: Ribosome-binding factor A (130 aa).

It belongs to the RbfA family. In terms of assembly, monomer. Binds 30S ribosomal subunits, but not 50S ribosomal subunits or 70S ribosomes.

The protein resides in the cytoplasm. In terms of biological role, one of several proteins that assist in the late maturation steps of the functional core of the 30S ribosomal subunit. Associates with free 30S ribosomal subunits (but not with 30S subunits that are part of 70S ribosomes or polysomes). Required for efficient processing of 16S rRNA. May interact with the 5'-terminal helix region of 16S rRNA. This chain is Ribosome-binding factor A, found in Prochlorococcus marinus (strain SARG / CCMP1375 / SS120).